We begin with the raw amino-acid sequence, 815 residues long: Echinoderm microtubule-associated protein-like 1 (815 aa).

The stretch at S31 to Q72 forms a coiled coil. The interval N77–V179 is disordered. Positions P92–T101 are enriched in polar residues. A Phosphoserine modification is found at S113. Positions T126–R138 are enriched in polar residues. The span at G143–G153 shows a compositional bias: basic and acidic residues. The span at N156–K168 shows a compositional bias: low complexity. The interval K176–I815 is tandem atypical propeller in EMLs. WD repeat units follow at residues E261–S310, T315–W358, K363–L400, Q409–K446, R450–G489, K493–T530, F535–A572, V578–T613, D617–V655, R664–P701, S709–Y768, and A775–V814.

This sequence belongs to the WD repeat EMAP family. Homotrimer; self-association is mediated by the N-terminal coiled coil. Does not interact with EML3. Binds repolymerizing microtubules. Binds unpolymerized tubulins via its WD repeat region. Interacts with TASOR. Ubiquitous; expressed in most tissues with the exception of thymus and peripheral blood lymphocytes.

It is found in the cytoplasm. The protein localises to the perinuclear region. The protein resides in the cytoskeleton. Modulates the assembly and organization of the microtubule cytoskeleton, and probably plays a role in regulating the orientation of the mitotic spindle and the orientation of the plane of cell division. Required for normal proliferation of neuronal progenitor cells in the developing brain and for normal brain development. Does not affect neuron migration per se. This Homo sapiens (Human) protein is Echinoderm microtubule-associated protein-like 1 (EML1).